The chain runs to 359 residues: Peptide chain release factor 1 (359 aa).

Residue Q233 is modified to N5-methylglutamine.

It belongs to the prokaryotic/mitochondrial release factor family. Methylated by PrmC. Methylation increases the termination efficiency of RF1.

The protein resides in the cytoplasm. Peptide chain release factor 1 directs the termination of translation in response to the peptide chain termination codons UAG and UAA. The sequence is that of Peptide chain release factor 1 from Orientia tsutsugamushi (strain Boryong) (Rickettsia tsutsugamushi).